Consider the following 353-residue polypeptide: Polycomb group RING finger protein 6 (353 aa).

The segment at 1-116 is disordered; that stretch reads MDEAETDATE…FSLRLESGRA (116 aa). Residues 9-19 are compositionally biased toward basic and acidic residues; the sequence is TENKRASEAKR. Positions 23–39 are enriched in pro residues; that stretch reads MPPPPPPPPPISPPALI. Ser-34 is subject to Phosphoserine. Positions 40–52 are enriched in low complexity; the sequence is PAPAAGEEGPASL. Residues 69–82 show a composition bias toward basic and acidic residues; sequence EPERSLGRLRGRFE. The stretch at 71–112 forms a coiled coil; that stretch reads ERSLGRLRGRFEDYDEELEEEEEMEEEEEEEEEMSHFSLRLE. The span at 83–103 shows a compositional bias: acidic residues; it reads DYDEELEEEEEMEEEEEEEEE. Ser-118 bears the Phosphoserine mark. Residues 137–176 form an RING-type zinc finger; the sequence is CSICKGYLIDATTITECLHTFCKSCIVRHFYYSNRCPKCN. Glycyl lysine isopeptide (Lys-Gly) (interchain with G-Cter in SUMO2) cross-links involve residues Lys-226 and Lys-237.

Component of a PRC1-like complex. Interacts with BMI1/PCGF4, RING1 and RNF2. Interacts with KDM5D. Interacts with CBX4, CBX6, CBX7 and CBX8. In terms of processing, phosphorylated during mitosis. As to expression, expressed in ovary, testis, stomach, liver, thymus and kidney (at protein level).

The protein resides in the nucleus. Transcriptional repressor. May modulate the levels of histone H3K4Me3 by activating KDM5D histone demethylase. Component of a Polycomb group (PcG) multiprotein PRC1-like complex, a complex class required to maintain the transcriptionally repressive state of many genes, including Hox genes, throughout development. PcG PRC1 complex acts via chromatin remodeling and modification of histones; it mediates monoubiquitination of histone H2A 'Lys-119', rendering chromatin heritably changed in its expressibility. Within the PRC1-like complex, regulates RNF2 ubiquitin ligase activity. In Mus musculus (Mouse), this protein is Polycomb group RING finger protein 6 (Pcgf6).